A 478-amino-acid chain; its full sequence is Metalloendopeptidase OMA1, mitochondrial (478 aa).

The interval 134–164 is stress-sensor region; that stretch reads LGRSIRKWWVALPANKKQLFREWSWRRRWHF. The chain crosses the membrane as a helical span at residues 163 to 183; it reads HFLGAGTGLLFIASLFFFTHL. Residue His-296 coordinates Zn(2+). Glu-297 is a catalytic residue. 2 residues coordinate Zn(2+): His-300 and Glu-361. Cys-376 and Cys-434 form a disulfide bridge.

Belongs to the peptidase M48 family. Homooligomer. The cofactor is Zn(2+). Autocatalytically cleaved in response to mitochondrial depolarization both at the N-terminus and C-terminus to generate the short active form (S-OMA1). The S-OMA1 form is unstable. In terms of processing, may form a redox-dependent disulfide bond. Exists in a semi-oxidized state and is activated by prolonged hypoxia.

Its subcellular location is the mitochondrion inner membrane. Its activity is regulated as follows. Protease activity is activated upon autocatalytic cleavage in response to mitochondrial depolarization. In terms of biological role, metalloprotease that is part of the quality control system in the inner membrane of mitochondria. Activated in response to various mitochondrial stress, leading to the proteolytic cleavage of target proteins, such as opa1 and dele1. Involved in the fusion of the mitochondrial inner membranes by mediating cleavage of opa1 at S1 position, generating the soluble opa1 (S-opa1), which cooperates with the membrane form (L-opa1) to coordinate the fusion of mitochondrial inner membranes. Following stress conditions that induce loss of mitochondrial membrane potential, mediates cleavage of opa1, leading to excess production of soluble opa1 (S-opa1) and negative regulation of mitochondrial fusion. Also acts as an activator of the integrated stress response (ISR): in response to mitochondrial stress, mediates cleavage of dele1 to generate the processed form of dele1 (S-DELE1), which translocates to the cytosol and activates eif2ak1/hri to trigger the ISR. Required for the stability of the respiratory supercomplexes. This is Metalloendopeptidase OMA1, mitochondrial from Danio rerio (Zebrafish).